The following is a 262-amino-acid chain: F-actin-capping protein subunit alpha (262 aa).

This sequence belongs to the F-actin-capping protein alpha subunit family. Heterodimer of an alpha and a beta subunit.

The protein localises to the cytoplasm. It localises to the cytoskeleton. In terms of biological role, F-actin-capping proteins bind in a Ca(2+)-independent manner to the fast growing ends of actin filaments (barbed end) thereby blocking the exchange of subunits at these ends. Unlike other capping proteins (such as gelsolin and severin), these proteins do not sever actin filaments. This chain is F-actin-capping protein subunit alpha (CAP1), found in Yarrowia lipolytica (strain CLIB 122 / E 150) (Yeast).